A 316-amino-acid chain; its full sequence is Porphobilinogen deaminase (316 aa).

At Cys-249 the chain carries S-(dipyrrolylmethanemethyl)cysteine.

It belongs to the HMBS family. As to quaternary structure, monomer. Dipyrromethane is required as a cofactor.

It carries out the reaction 4 porphobilinogen + H2O = hydroxymethylbilane + 4 NH4(+). The protein operates within porphyrin-containing compound metabolism; protoporphyrin-IX biosynthesis; coproporphyrinogen-III from 5-aminolevulinate: step 2/4. In terms of biological role, tetrapolymerization of the monopyrrole PBG into the hydroxymethylbilane pre-uroporphyrinogen in several discrete steps. In Nitrobacter hamburgensis (strain DSM 10229 / NCIMB 13809 / X14), this protein is Porphobilinogen deaminase.